A 97-amino-acid polypeptide reads, in one-letter code: Ferredoxin-3 (97 aa).

2 consecutive 4Fe-4S ferredoxin-type domains span residues 18 to 47 and 65 to 95; these read FAES…LKAL and KVMV…HNPL. Positions 27, 30, 33, 37, 75, 78, 81, and 85 each coordinate [4Fe-4S] cluster.

Homodimer. The cofactor is [4Fe-4S] cluster.

Its function is as follows. Ferredoxins are iron-sulfur proteins that transfer electrons in a wide variety of metabolic reactions. This chain is Ferredoxin-3 (fdxB), found in Nostoc sp. (strain PCC 7120 / SAG 25.82 / UTEX 2576).